The following is a 136-amino-acid chain: Protein NrdI (136 aa).

Belongs to the NrdI family.

Functionally, probably involved in ribonucleotide reductase function. This chain is Protein NrdI, found in Salmonella newport (strain SL254).